Consider the following 198-residue polypeptide: Ras-related protein Rab-34, isoform NARR (198 aa).

13 tandem repeats follow at residues Pro7–Arg15, Pro16–Arg24, Pro25–Arg33, Pro34–Arg42, Ala43–Pro51, Arg52–Ser60, Pro61–Thr69, Pro70–Ser78, Pro79–Ser87, Pro88–Ser96, Pro97–Ser105, Pro106–Thr114, and Pro115–Ser123. Residues Pro7–Arg125 are 13 x 9 AA approximate tandem-repeats of P-R-V-I-V-G-(S/T)-P-R. Ser13 is modified (phosphoserine). The tract at residues Ile37–Arg64 is disordered. Residue Thr69 is modified to Phosphothreonine. A phosphoserine mark is found at Ser78, Ser87, and Ser96. Positions Val94 to Val121 are enriched in low complexity. A disordered region spans residues Val94–Ile198. Residue Ser123 is modified to Phosphoserine. Over residues Arg145–Gly157 the composition is skewed to basic and acidic residues. Over residues Gly161 to Arg178 the composition is skewed to low complexity.

May interact with EIF5A and ERF1. Phosphorylated during M-phase.

The protein localises to the nucleus. The protein resides in the nucleolus. In Homo sapiens (Human), this protein is Ras-related protein Rab-34, isoform NARR (RAB34).